A 396-amino-acid chain; its full sequence is Phosphoglycerate kinase (396 aa).

Substrate is bound by residues 21-23 (DLN), Arg-36, 59-62 (HLGR), Arg-113, and Arg-146. Residues Lys-197, Glu-319, and 345–348 (GGDT) each bind ATP.

Belongs to the phosphoglycerate kinase family. In terms of assembly, monomer.

It localises to the cytoplasm. It carries out the reaction (2R)-3-phosphoglycerate + ATP = (2R)-3-phospho-glyceroyl phosphate + ADP. It functions in the pathway carbohydrate degradation; glycolysis; pyruvate from D-glyceraldehyde 3-phosphate: step 2/5. In Legionella pneumophila (strain Lens), this protein is Phosphoglycerate kinase.